The following is a 701-amino-acid chain: MNPVIKTFQFGQSTVTLETGRIARQATGAVLVTVDNDVTVLVTVVGAKQADPGKGFFPLSVHYQEKTYAAGKIPGGFFKREGRPSEKETLTSRLIDRPIRPLFPEGFMNEVQVVCTVVSTSKKTDPDIAAMIGTSAALAISGIPFEGPIGAARVAFHESTGYLLNPTYEQLAASSLDMVVAGTADAVLMVESEAQELTEDQMLGAVLFAHDEFQAVIQAVKELAAEAAKPTWDWKPAVANTELFNAIRAEFGEAVSQGYTITVKADRYARLGELRDQAIAKFSGEEGQPSASEVKEIFGEIEYRTVRENIVNGKPRIDGRDTKTVRPLNIEVGVLPKTHGSALFTRGETQALVVATLGTARDAQLLDTLEGEKKDPFMLHYNFPPFSVGECGRMGGAGRREIGHGRLARRSVQAMLPAADVFPYTIRVVSEITESNGSSSMASVCGASLALMDAGVPMKAPVAGIAMGLVKEGEKFAVLTDILGDEDHLGDMDFKVAGTAKGVTALQMDIKINGITEEIMEIALGQALEARLNILGQMNQIIGQSRTELSANAPTMIAMKIDTDKIRDVIGKGGATIRAICEETKASIDIEDDGSIKIFGETKEAAEAAKQRILGITAEAEIGKIYVGKVERIVDFGAFVNILPGKDGLVHISMLSDARVEKVTDILKEGQEVEVLVLDVDNRGRIKLSIKDVAAAKASGV.

The Mg(2+) site is built by Asp487 and Asp493. A KH domain is found at 554-613 (PTMIAMKIDTDKIRDVIGKGGATIRAICEETKASIDIEDDGSIKIFGETKEAAEAAKQRI). The S1 motif domain maps to 623 to 691 (GKIYVGKVER…NRGRIKLSIK (69 aa)).

This sequence belongs to the polyribonucleotide nucleotidyltransferase family. As to quaternary structure, component of the RNA degradosome, which is a multiprotein complex involved in RNA processing and mRNA degradation. Mg(2+) is required as a cofactor.

Its subcellular location is the cytoplasm. It catalyses the reaction RNA(n+1) + phosphate = RNA(n) + a ribonucleoside 5'-diphosphate. Functionally, involved in mRNA degradation. Catalyzes the phosphorolysis of single-stranded polyribonucleotides processively in the 3'- to 5'-direction. The sequence is that of Polyribonucleotide nucleotidyltransferase from Pseudomonas putida (strain GB-1).